Here is an 87-residue protein sequence, read N- to C-terminus: UPF0367 protein Pro_0144 (87 aa).

Belongs to the UPF0367 family.

The chain is UPF0367 protein Pro_0144 from Prochlorococcus marinus (strain SARG / CCMP1375 / SS120).